The sequence spans 107 residues: Nucleoid-associated protein BAbS19_I00290 (107 aa).

Belongs to the YbaB/EbfC family. As to quaternary structure, homodimer.

It is found in the cytoplasm. Its subcellular location is the nucleoid. Its function is as follows. Binds to DNA and alters its conformation. May be involved in regulation of gene expression, nucleoid organization and DNA protection. The protein is Nucleoid-associated protein BAbS19_I00290 of Brucella abortus (strain S19).